A 297-amino-acid chain; its full sequence is N-acetylneuraminate lyase (297 aa).

Positions 47 and 48 each coordinate aceneuramate. Catalysis depends on Tyr137, which acts as the Proton donor. Catalysis depends on Lys165, which acts as the Schiff-base intermediate with substrate. Aceneuramate contacts are provided by Thr167, Gly189, Asp191, Glu192, and Ser208.

It belongs to the DapA family. NanA subfamily. As to quaternary structure, homotetramer.

The protein resides in the cytoplasm. The catalysed reaction is aceneuramate = aldehydo-N-acetyl-D-mannosamine + pyruvate. It functions in the pathway amino-sugar metabolism; N-acetylneuraminate degradation; D-fructose 6-phosphate from N-acetylneuraminate: step 1/5. Functionally, catalyzes the reversible aldol cleavage of N-acetylneuraminic acid (sialic acid; Neu5Ac) to form pyruvate and N-acetylmannosamine (ManNAc) via a Schiff base intermediate. This is N-acetylneuraminate lyase from Enterobacter sp. (strain 638).